Reading from the N-terminus, the 427-residue chain is MSSIVDVIAREILDSRGNPTVECDVWLDSGVMGRAAVPSGASTGEKEALELRDGDARRYLGKGVLKAVEHVNNEICEALIGLDPTDQAYIDQTLLELDGTDNKGSLGANAILAVSVAVAKAAALEVGLPLYRYLGGSGPMSLPVPMMNVINGGAHANNTLDIQEFMIMPVGARSFREALRCGAEIFHTLKKICADKGYSTAVGDEGGFAPNLARNEDAIKLILEATDKAGYVPGEDVLIALDCASSEFYKDGKYHLAGENLALSSEEFTNYLATLCDNYPIISIEDGMSEHDWAGWKLLTDKLGDKVQLVGDDVFVTNPAILAEGIKQGICNSLLVKINQIGSLSETLKAVDLAKRSGYTSVMSHRSGETEDSTIADLAVATNCMQIKTGSLSRSDRMAKYNQLLRIEEELGSAASYPGRAAFYHLK.

Gln-163 is a binding site for (2R)-2-phosphoglycerate. Residue Glu-205 is the Proton donor of the active site. Mg(2+) contacts are provided by Asp-242, Glu-285, and Asp-312. The (2R)-2-phosphoglycerate site is built by Lys-337, Arg-366, Ser-367, and Lys-388. Catalysis depends on Lys-337, which acts as the Proton acceptor.

The protein belongs to the enolase family. Mg(2+) is required as a cofactor.

Its subcellular location is the cytoplasm. The protein localises to the secreted. It localises to the cell surface. The enzyme catalyses (2R)-2-phosphoglycerate = phosphoenolpyruvate + H2O. It participates in carbohydrate degradation; glycolysis; pyruvate from D-glyceraldehyde 3-phosphate: step 4/5. In terms of biological role, catalyzes the reversible conversion of 2-phosphoglycerate (2-PG) into phosphoenolpyruvate (PEP). It is essential for the degradation of carbohydrates via glycolysis. The protein is Enolase of Laribacter hongkongensis (strain HLHK9).